Here is a 31-residue protein sequence, read N- to C-terminus: Chassatide C6 (31 aa).

The cyclopeptide (Gly-Asn) cross-link spans 1–31 (GVIPCGESCVFIPCISSVIGCSCKNKVCYRN). 3 disulfides stabilise this stretch: C5–C21, C9–C23, and C14–C28.

Post-translationally, this is a cyclic peptide. As to expression, expressed in fruit, pedicel, root and stem but not in leaf (at protein level).

Its function is as follows. Probably participates in a plant defense mechanism. This is Chassatide C6 from Chassalia chartacea (Chassalia curviflora).